Consider the following 162-residue polypeptide: V-type proton ATPase subunit c' (162 aa).

Residues 1–11 (MSSNLCPIYSS) lie on the Lumenal side of the membrane. The chain crosses the membrane as a helical span at residues 12–32 (FFGFAGVCASMVFSCLGAGYG). The Cytoplasmic segment spans residues 33–54 (TALAGRGIAAVGAFRPEIVMKS). The chain crosses the membrane as a helical span at residues 55–75 (LIPVVMSGIIGVYGLVMSVLI). Topologically, residues 76 to 93 (AGDMSPDNDYSLFSGFIH) are lumenal. A helical transmembrane segment spans residues 94-114 (LSAGLAVGLTGVAAGYAIGVV). Topologically, residues 115–132 (GDRGVQSFMRQDRIFVSM) are cytoplasmic. The chain crosses the membrane as a helical span at residues 133 to 153 (VLILIFAEVLGLYGLIVGLIL). Residues 154-162 (QTKTSNVCY) lie on the Lumenal side of the membrane.

The protein belongs to the V-ATPase proteolipid subunit family. In terms of assembly, V-ATPase is a heteromultimeric enzyme composed of a peripheral catalytic V1 complex (components A to H) attached to an integral membrane V0 proton pore complex (components: a, c, c', c'', d, e, f and VOA1). The decameric c-ring forms the proton-conducting pore, and is composed of eight proteolipid subunits c, one subunit c' and one subunit c''.

The protein resides in the vacuole membrane. Its function is as follows. Proton-conducting pore forming subunit of the V0 complex of vacuolar(H+)-ATPase (V-ATPase), a multisubunit enzyme composed of a peripheral complex (V1) that hydrolyzes ATP and a membrane integral complex (V0) that translocates protons. V-ATPase is responsible for acidifying and maintaining the pH of intracellular compartments. The protein is V-type proton ATPase subunit c' of Schizosaccharomyces pombe (strain 972 / ATCC 24843) (Fission yeast).